The following is a 140-amino-acid chain: Arsenate reductase (140 aa).

The active-site Nucleophile; cysteine thioarsenate intermediate is Cys11.

Belongs to the ArsC family.

It catalyses the reaction [glutaredoxin]-dithiol + arsenate + glutathione + H(+) = glutathionyl-S-S-[glutaredoxin] + arsenite + H2O. Its function is as follows. Involved in resistance to arsenate. Catalyzes the reduction of arsenate [As(V)] to arsenite [As(III)]. The resulting arsenite is then extruded from the cell via the aquaglyceroporin AqpS. Does not display antimonate reductase activity. The sequence is that of Arsenate reductase from Rhizobium meliloti (strain 1021) (Ensifer meliloti).